The chain runs to 285 residues: Probable endonuclease 4 (285 aa).

9 residues coordinate Zn(2+): His-69, His-109, Glu-145, Asp-179, His-182, His-216, Asp-229, His-231, and Glu-261.

Belongs to the AP endonuclease 2 family. The cofactor is Zn(2+).

The catalysed reaction is Endonucleolytic cleavage to 5'-phosphooligonucleotide end-products.. Functionally, endonuclease IV plays a role in DNA repair. It cleaves phosphodiester bonds at apurinic or apyrimidinic (AP) sites, generating a 3'-hydroxyl group and a 5'-terminal sugar phosphate. This Salmonella agona (strain SL483) protein is Probable endonuclease 4.